The following is an 85-amino-acid chain: Large ribosomal subunit protein bL27 (85 aa).

The segment at 1 to 22 is disordered; the sequence is MAHKKAGGSTRNGRDSEAKRMG.

It belongs to the bacterial ribosomal protein bL27 family.

The polypeptide is Large ribosomal subunit protein bL27 (Escherichia coli O6:K15:H31 (strain 536 / UPEC)).